A 296-amino-acid polypeptide reads, in one-letter code: Phosphoribosylaminoimidazole-succinocarboxamide synthase (296 aa).

The protein belongs to the SAICAR synthetase family.

The catalysed reaction is 5-amino-1-(5-phospho-D-ribosyl)imidazole-4-carboxylate + L-aspartate + ATP = (2S)-2-[5-amino-1-(5-phospho-beta-D-ribosyl)imidazole-4-carboxamido]succinate + ADP + phosphate + 2 H(+). The protein operates within purine metabolism; IMP biosynthesis via de novo pathway; 5-amino-1-(5-phospho-D-ribosyl)imidazole-4-carboxamide from 5-amino-1-(5-phospho-D-ribosyl)imidazole-4-carboxylate: step 1/2. In Thioalkalivibrio sulfidiphilus (strain HL-EbGR7), this protein is Phosphoribosylaminoimidazole-succinocarboxamide synthase.